The following is a 437-amino-acid chain: Protein RecA (437 aa).

Residue 69-76 (GPESSGKT) participates in ATP binding. A disordered region spans residues 343–437 (HDAAVRTSPD…GNGKSVKRKG (95 aa)). Polar residues-rich tracts occupy residues 350–371 (SPDTNSRKVSGTGAVHTTSGSP), 380–391 (GAVNNSRDSTGG), and 400–426 (LNLSVNRDVSTDTVSSKISDATHNQKP).

This sequence belongs to the RecA family.

The protein resides in the cytoplasm. Can catalyze the hydrolysis of ATP in the presence of single-stranded DNA, the ATP-dependent uptake of single-stranded DNA by duplex DNA, and the ATP-dependent hybridization of homologous single-stranded DNAs. It interacts with LexA causing its activation and leading to its autocatalytic cleavage. This Tropheryma whipplei (strain Twist) (Whipple's bacillus) protein is Protein RecA.